A 293-amino-acid chain; its full sequence is Methoxy mycolic acid synthase MmaA3 (293 aa).

S-adenosyl-L-methionine-binding positions include 39-40, 78-80, 100-105, 129-130, and Ile142; these read YS, GCG, TLSKNQ, and WA. Cys275 is an active-site residue.

The protein belongs to the CFA/CMAS family.

It participates in lipid metabolism; mycolic acid biosynthesis. Its function is as follows. Involved in the biosynthesis of methoxymycolic acid. It catalyzes the O-methylation of the hydroxy group of the hydroxymycolate to form a methyl ether. The polypeptide is Methoxy mycolic acid synthase MmaA3 (cmaB) (Mycobacterium bovis (strain ATCC BAA-935 / AF2122/97)).